Here is a 151-residue protein sequence, read N- to C-terminus: Ubiquitin-conjugating enzyme E2 2 (151 aa).

Positions 4–150 constitute a UBC core domain; that stretch reads AARRRLMRDF…VRETVEKSWE (147 aa). C88 (glycyl thioester intermediate) is an active-site residue.

It belongs to the ubiquitin-conjugating enzyme family.

The protein resides in the cytoplasm. It localises to the nucleus. It catalyses the reaction S-ubiquitinyl-[E1 ubiquitin-activating enzyme]-L-cysteine + [E2 ubiquitin-conjugating enzyme]-L-cysteine = [E1 ubiquitin-activating enzyme]-L-cysteine + S-ubiquitinyl-[E2 ubiquitin-conjugating enzyme]-L-cysteine.. Its pathway is protein modification; protein ubiquitination. Its function is as follows. Catalyzes the covalent attachment of ubiquitin to other proteins. Plays a role in transcription regulation by catalyzing the monoubiquitination of histone H2B to form H2BK123ub1. H2BK123ub1 gives a specific tag for epigenetic transcriptional activation and is also a prerequisite for H3K4me and H3K79me formation. Also involved in postreplication repair of UV-damaged DNA, in N-end rule-dependent protein degradation and in sporulation. In Fusarium solani (Filamentous fungus), this protein is Ubiquitin-conjugating enzyme E2 2 (UBC2).